The chain runs to 21 residues: Preblooming protein 2 (21 aa).

Its function is as follows. Possible mediator for cell division in the blooming process. This chain is Preblooming protein 2, found in Prorocentrum triestinum (Red tide alga).